A 62-amino-acid chain; its full sequence is Overexpressed in colon carcinoma 1 protein homolog (62 aa).

A compositionally biased stretch (gly residues) spans Met1–Ala16. Residues Met1–Asp62 are disordered.

The protein belongs to the OCC1 family.

The chain is Overexpressed in colon carcinoma 1 protein homolog from Gallus gallus (Chicken).